The primary structure comprises 111 residues: Ig kappa chain V-III region PC 2880/PC 1229 (111 aa).

A framework-1 region spans residues 1 to 23 (DIVLTQSPASLAVSLGQRATISC). Cysteine 23 and cysteine 92 are joined by a disulfide. The complementarity-determining-1 stretch occupies residues 24–38 (RASESVDNYGISFMN). Residues 39–53 (WFQQKPGQPPKLLIY) form a framework-2 region. Positions 54-60 (AASNQGS) are complementarity-determining-2. A framework-3 region spans residues 61–92 (GVPARFSGSGSGTDFSLNIHPMEEDDTAMYFC). Positions 93–101 (QQSKEVPWT) are complementarity-determining-3. The framework-4 stretch occupies residues 102–111 (FGGGTKLEIK).

This Mus musculus (Mouse) protein is Ig kappa chain V-III region PC 2880/PC 1229.